A 62-amino-acid polypeptide reads, in one-letter code: Large ribosomal subunit protein uL29 (62 aa).

Belongs to the universal ribosomal protein uL29 family.

This chain is Large ribosomal subunit protein uL29, found in Laribacter hongkongensis (strain HLHK9).